The chain runs to 143 residues: Ribonuclease H (143 aa).

The RNase H type-1 domain occupies 1-136 (MQEIEIFCDG…CDSLAKLEAQ (136 aa)). D9, E47, D69, and D128 together coordinate Mg(2+).

It belongs to the RNase H family. Monomer. Mg(2+) serves as cofactor.

The protein resides in the cytoplasm. It catalyses the reaction Endonucleolytic cleavage to 5'-phosphomonoester.. Endonuclease that specifically degrades the RNA of RNA-DNA hybrids. The sequence is that of Ribonuclease H from Helicobacter acinonychis (strain Sheeba).